The following is a 297-amino-acid chain: Manganese efflux system protein MneP (297 aa).

6 helical membrane-spanning segments follow: residues 12–32 (VALI…FFGL), 43–63 (GIHS…IGIS), 85–105 (IVGI…ILSF), 111–131 (VPQY…EILY), 155–175 (GDIV…IGNS), and 177–197 (GWSY…YLIF).

The protein belongs to the cation diffusion facilitator (CDF) transporter (TC 2.A.4) family.

It is found in the cell membrane. In terms of biological role, primary efflux pump for manganese. May prevent manganese intoxication. The chain is Manganese efflux system protein MneP from Bacillus subtilis (strain 168).